The following is a 396-amino-acid chain: Putative F-box/kelch-repeat protein At3g17540 (396 aa).

Residues 4–50 (TMVISDLPHEIESEILSRVPTKSLAKLHTTCKRWYALFRDPRFVKKN) enclose the F-box domain. 3 Kelch repeats span residues 163 to 209 (LRYC…GMSL), 253 to 299 (VLSI…FLAV), and 338 to 386 (RIYI…KRKG).

The polypeptide is Putative F-box/kelch-repeat protein At3g17540 (Arabidopsis thaliana (Mouse-ear cress)).